The chain runs to 236 residues: Alpha-acetolactate decarboxylase (236 aa).

Belongs to the alpha-acetolactate decarboxylase family.

The catalysed reaction is (2S)-2-acetolactate + H(+) = (R)-acetoin + CO2. Its pathway is polyol metabolism; (R,R)-butane-2,3-diol biosynthesis; (R,R)-butane-2,3-diol from pyruvate: step 2/3. Its function is as follows. Converts acetolactate into acetoin. In Lactococcus lactis subsp. lactis (strain IL1403) (Streptococcus lactis), this protein is Alpha-acetolactate decarboxylase (aldB).